We begin with the raw amino-acid sequence, 393 residues long: Stearoyl-[acyl-carrier-protein] 9-desaturase, chloroplastic (393 aa).

Residues 1–30 constitute a chloroplast transit peptide; that stretch reads MALNINGVSLKSHKMLPFPCSSARSERVFM. Residues Glu135, Glu173, His176, Glu259, and His262 each contribute to the Fe cation site.

Belongs to the fatty acid desaturase type 2 family. Homodimer. Fe(2+) serves as cofactor.

The protein localises to the plastid. Its subcellular location is the chloroplast. It carries out the reaction octadecanoyl-[ACP] + 2 reduced [2Fe-2S]-[ferredoxin] + O2 + 2 H(+) = (9Z)-octadecenoyl-[ACP] + 2 oxidized [2Fe-2S]-[ferredoxin] + 2 H2O. It participates in lipid metabolism; fatty acid metabolism. Its function is as follows. Converts stearoyl-ACP to oleoyl-ACP by introduction of a cis double bond between carbons 9 and 10 of the acyl chain. The sequence is that of Stearoyl-[acyl-carrier-protein] 9-desaturase, chloroplastic from Solanum tuberosum (Potato).